Reading from the N-terminus, the 394-residue chain is Monoterpene synthase FDS-5, chloroplastic (394 aa).

The transit peptide at 1-65 (MASFISLSSK…NLNSQFMQVY (65 aa)) directs the protein to the chloroplast. Isopentenyl diphosphate is bound by residues K100, R103, and Q138. Positions 145 and 149 each coordinate Mg(2+). The short motif at 145–149 (DDMMD) is the DDXXD motif element. R154 is a dimethylallyl diphosphate binding site. R155 is a binding site for isopentenyl diphosphate. 4 residues coordinate dimethylallyl diphosphate: K242, Q281, K298, and K307.

The protein belongs to the FPP/GGPP synthase family. Requires Mg(2+) as cofactor. Mn(2+) serves as cofactor.

Its subcellular location is the plastid. It is found in the chloroplast. It catalyses the reaction isopentenyl diphosphate + dimethylallyl diphosphate = (2E)-geranyl diphosphate + diphosphate. It carries out the reaction 2 dimethylallyl diphosphate = (R,R)-chrysanthemyl diphosphate + diphosphate. The enzyme catalyses 2 dimethylallyl diphosphate = (R)-lavandulyl diphosphate + diphosphate. Its function is as follows. Condenses two molecules of dimethylallyl diphosphate (DMAPP) to produce mainly an irregular monoterpene, chrysanthemyl diphosphate (CPP) and lower amounts of a branched monoterpene, lavandulyl diphosphate (LPP). CPP is a precursor of the pyrethrin insecticides. When incubated with isopentenyl diphosphate (IPP) and DMAPP, catalyzes three competing isoprenoid condensation reactions, a chain elongation to give geranyl diphosphate (GPP), a cyclopropanation to give CPP and a branching to give LPP. This is Monoterpene synthase FDS-5, chloroplastic (FDS-5) from Artemisia spiciformis (Spiked big sagebrush).